The primary structure comprises 187 residues: uncharacterized protein (187 aa).

Residues phenylalanine 8 to leucine 28 form a helical membrane-spanning segment.

The protein localises to the membrane. This is an uncharacterized protein from Bacillus subtilis (strain 168).